We begin with the raw amino-acid sequence, 447 residues long: Cysteine--tRNA ligase (447 aa).

Residue C28 coordinates Zn(2+). The 'HIGH' region signature appears at 30–40 (PTVYNYIHIGN). Zn(2+) contacts are provided by C211, H236, and E240. The short motif at 268–272 (KMSKS) is the 'KMSKS' region element. Position 271 (K271) interacts with ATP.

Belongs to the class-I aminoacyl-tRNA synthetase family. Monomer. Zn(2+) serves as cofactor.

The protein localises to the cytoplasm. It carries out the reaction tRNA(Cys) + L-cysteine + ATP = L-cysteinyl-tRNA(Cys) + AMP + diphosphate. The polypeptide is Cysteine--tRNA ligase (Streptococcus pyogenes serotype M6 (strain ATCC BAA-946 / MGAS10394)).